A 151-amino-acid polypeptide reads, in one-letter code: SsrA-binding protein (151 aa).

The protein belongs to the SmpB family.

It is found in the cytoplasm. Functionally, required for rescue of stalled ribosomes mediated by trans-translation. Binds to transfer-messenger RNA (tmRNA), required for stable association of tmRNA with ribosomes. tmRNA and SmpB together mimic tRNA shape, replacing the anticodon stem-loop with SmpB. tmRNA is encoded by the ssrA gene; the 2 termini fold to resemble tRNA(Ala) and it encodes a 'tag peptide', a short internal open reading frame. During trans-translation Ala-aminoacylated tmRNA acts like a tRNA, entering the A-site of stalled ribosomes, displacing the stalled mRNA. The ribosome then switches to translate the ORF on the tmRNA; the nascent peptide is terminated with the 'tag peptide' encoded by the tmRNA and targeted for degradation. The ribosome is freed to recommence translation, which seems to be the essential function of trans-translation. This Chlamydia muridarum (strain MoPn / Nigg) protein is SsrA-binding protein.